The primary structure comprises 434 residues: Zinc finger CCCH domain-containing protein 10 (434 aa).

The disordered stretch occupies residues 1–37; that stretch reads MPDRDSYANGTGSSGGGPGGGGSEEASGAGVGSGGAS. The span at 12–35 shows a compositional bias: gly residues; that stretch reads GSSGGGPGGGGSEEASGAGVGSGG. 3 C3H1-type zinc fingers span residues 36-63, 73-99, and 134-161; these read ASSD…HPDM, KNEF…HGSK, and KEEV…HLQR. Residues arginine 185 and arginine 186 each carry the omega-N-methylarginine modification. Residues 196–207 are compositionally biased toward basic and acidic residues; the sequence is PDRGFEDHEPGP. The interval 196 to 217 is disordered; sequence PDRGFEDHEPGPKRRRGGCCPP. Positions 234–280 form a coiled coil; the sequence is GVECRLLEEENAMLRKRVEELKKQVSNLLATNEVLLEQNAQFRNQAK. Over residues 314 to 330 the composition is skewed to polar residues; it reads TTLSSQALQPRPVSQQE. The interval 314 to 362 is disordered; it reads TTLSSQALQPRPVSQQELVAPAGAPAAPPTNAAPPAAPPPPPPHLTPEI. Residues 339–358 show a composition bias toward pro residues; that stretch reads AAPPTNAAPPAAPPPPPPHL.

Its subcellular location is the nucleus. Functionally, specific regulator of miRNA biogenesis. Binds, via the C3H1-type zinc finger domains, to the binding motif 5'-GCAGCGC-3' on microRNA pri-MIR143 and negatively regulates the processing to mature microRNA. This chain is Zinc finger CCCH domain-containing protein 10 (ZC3H10), found in Homo sapiens (Human).